The chain runs to 515 residues: Glycosyltransferase family 92 protein F59C6.8 (515 aa).

Residues leucine 18 to leucine 38 form a helical membrane-spanning segment. Residues arginine 163–tyrosine 456 enclose the GT92 domain.

This sequence belongs to the glycosyltransferase 92 family.

The protein localises to the membrane. The protein is Glycosyltransferase family 92 protein F59C6.8 of Caenorhabditis elegans.